Here is a 160-residue protein sequence, read N- to C-terminus: Large ribosomal subunit protein eL21 (160 aa).

It belongs to the eukaryotic ribosomal protein eL21 family. As to quaternary structure, component of the large ribosomal subunit. Mature ribosomes consist of a small (40S) and a large (60S) subunit. The 40S subunit contains about 32 different proteins and 1 molecule of RNA (18S). The 60S subunit contains 45 different proteins and 3 molecules of RNA (25S, 5.8S and 5S).

The protein resides in the cytoplasm. Component of the ribosome, a large ribonucleoprotein complex responsible for the synthesis of proteins in the cell. The small ribosomal subunit (SSU) binds messenger RNAs (mRNAs) and translates the encoded message by selecting cognate aminoacyl-transfer RNA (tRNA) molecules. The large subunit (LSU) contains the ribosomal catalytic site termed the peptidyl transferase center (PTC), which catalyzes the formation of peptide bonds, thereby polymerizing the amino acids delivered by tRNAs into a polypeptide chain. The nascent polypeptides leave the ribosome through a tunnel in the LSU and interact with protein factors that function in enzymatic processing, targeting, and the membrane insertion of nascent chains at the exit of the ribosomal tunnel. In Candida albicans (strain SC5314 / ATCC MYA-2876) (Yeast), this protein is Large ribosomal subunit protein eL21.